The sequence spans 238 residues: Uridylate kinase (238 aa).

10–13 (KFSG) lines the ATP pocket. Positions 18–23 (GENGFG) are involved in allosteric activation by GTP. UMP is bound at residue Gly52. ATP is bound by residues Gly53 and Arg57. Residues Asp73 and 134–141 (TGNPFFTT) each bind UMP. Residues Thr161, Tyr167, and Asp170 each coordinate ATP.

Belongs to the UMP kinase family. In terms of assembly, homohexamer.

The protein resides in the cytoplasm. It catalyses the reaction UMP + ATP = UDP + ADP. It functions in the pathway pyrimidine metabolism; CTP biosynthesis via de novo pathway; UDP from UMP (UMPK route): step 1/1. With respect to regulation, allosterically activated by GTP. Inhibited by UTP. Catalyzes the reversible phosphorylation of UMP to UDP. The chain is Uridylate kinase from Campylobacter concisus (strain 13826).